Consider the following 172-residue polypeptide: Adenine phosphoribosyltransferase (172 aa).

It belongs to the purine/pyrimidine phosphoribosyltransferase family. In terms of assembly, homodimer.

Its subcellular location is the cytoplasm. It carries out the reaction AMP + diphosphate = 5-phospho-alpha-D-ribose 1-diphosphate + adenine. The protein operates within purine metabolism; AMP biosynthesis via salvage pathway; AMP from adenine: step 1/1. Functionally, catalyzes a salvage reaction resulting in the formation of AMP, that is energically less costly than de novo synthesis. The chain is Adenine phosphoribosyltransferase from Clostridium beijerinckii (strain ATCC 51743 / NCIMB 8052) (Clostridium acetobutylicum).